Consider the following 141-residue polypeptide: Large ribosomal subunit protein uL11 (141 aa).

Belongs to the universal ribosomal protein uL11 family. In terms of assembly, part of the ribosomal stalk of the 50S ribosomal subunit. Interacts with L10 and the large rRNA to form the base of the stalk. L10 forms an elongated spine to which L12 dimers bind in a sequential fashion forming a multimeric L10(L12)X complex. In terms of processing, one or more lysine residues are methylated.

Its function is as follows. Forms part of the ribosomal stalk which helps the ribosome interact with GTP-bound translation factors. This is Large ribosomal subunit protein uL11 from Prochlorococcus marinus (strain MIT 9312).